The chain runs to 474 residues: BPI fold-containing family B member 1 (474 aa).

A signal peptide spans 1–21 (MAGPWIITLLCGLLGATLVQA). N-linked (GlcNAc...) asparagine glycans are attached at residues asparagine 153, asparagine 160, asparagine 263, and asparagine 400. The cysteines at positions 157 and 200 are disulfide-linked.

It belongs to the BPI/LBP/Plunc superfamily. Plunc family. In terms of tissue distribution, expressed in tongue, lung, thymus, and stomach. Expressed in epithelia of palate, anterior pharynx, trachea and upper bronchi. Expressed in distal tip of papillae in the anterior third of the tongue and in serous cells of von Ebner glands in the posterior third of the tongue. Expressed in columnar epithelium of the duodenum in embryonic gut at 16.5 dpc.

Its subcellular location is the secreted. Functionally, may play a role in innate immunity in mouth, nose and lungs. Binds bacterial lipopolysaccharide (LPS) and modulates the cellular responses to LPS. May be involved in formation of the left-right axis in the node of the developing embryo. The protein is BPI fold-containing family B member 1 (Bpifb1) of Mus musculus (Mouse).